A 302-amino-acid chain; its full sequence is ATP synthase gamma chain (302 aa).

It belongs to the ATPase gamma chain family. As to quaternary structure, F-type ATPases have 2 components, CF(1) - the catalytic core - and CF(0) - the membrane proton channel. CF(1) has five subunits: alpha(3), beta(3), gamma(1), delta(1), epsilon(1). CF(0) has three main subunits: a, b and c.

It localises to the cell inner membrane. Produces ATP from ADP in the presence of a proton gradient across the membrane. The gamma chain is believed to be important in regulating ATPase activity and the flow of protons through the CF(0) complex. The protein is ATP synthase gamma chain of Bartonella bacilliformis (strain ATCC 35685 / KC583 / Herrer 020/F12,63).